The chain runs to 518 residues: Calcium/calmodulin-dependent protein kinase kinase cmkC (518 aa).

The tract at residues 1 to 72 is disordered; sequence MANEGAGSLQ…SEYTLSQDDG (72 aa). Composition is skewed to polar residues over residues 8–17 and 60–71; these read SLQQDASPGS and NARSEYTLSQDD. In terms of domain architecture, Protein kinase spans 81 to 376; that stretch reads YVIKQEIGRG…MDELREHPWV (296 aa). ATP is bound by residues 87 to 95 and lysine 109; that span reads IGRGSFGAV. Positions 119-149 are disordered; sequence RAKSQLLRQSRGPKRSSRWPKLPFSSPGTGT. The Proton acceptor role is filled by aspartate 243. The autoinhibitory domain stretch occupies residues 404-409; the sequence is FSAITK. The segment at 407–431 is calmodulin-binding; it reads ITKNFGHVLAVMKAAKKFKSLQGPT. Positions 453–472 are disordered; the sequence is PTQMDPEESVSLPSPLPYKK.

The protein belongs to the protein kinase superfamily. Ser/Thr protein kinase family.

It catalyses the reaction L-seryl-[protein] + ATP = O-phospho-L-seryl-[protein] + ADP + H(+). The enzyme catalyses L-threonyl-[protein] + ATP = O-phospho-L-threonyl-[protein] + ADP + H(+). With respect to regulation, activated by Ca(2+)/calmodulin. Binding of calmodulin may relieve intrasteric autoinhibition. Calcium/calmodulin-dependent protein kinase that operates in the calcium-triggered CaMKK-CaMK1 signaling cascade. Phosphorylates and activates cmkB in vitro. Required in G1-phase of the cell cycle for proper timing of the initial nuclear division after germination as well as for subsequent nuclear division cycles. Required for the normal temporal regulation of nimX activity. This Emericella nidulans (Aspergillus nidulans) protein is Calcium/calmodulin-dependent protein kinase kinase cmkC.